The chain runs to 571 residues: Urease subunit alpha (571 aa).

In terms of domain architecture, Urease spans 134 to 571; sequence GAIDTHIHFI…LPMAQRYFLF (438 aa). Residues His139, His141, and Lys222 each contribute to the Ni(2+) site. At Lys222 the chain carries N6-carboxylysine. His224 contributes to the substrate binding site. Ni(2+)-binding residues include His251 and His277. His325 acts as the Proton donor in catalysis. Ni(2+) is bound at residue Asp365.

The protein belongs to the metallo-dependent hydrolases superfamily. Urease alpha subunit family. Heterotrimer of UreA (gamma), UreB (beta) and UreC (alpha) subunits. Three heterotrimers associate to form the active enzyme. The cofactor is Ni cation. Carboxylation allows a single lysine to coordinate two nickel ions.

The protein localises to the cytoplasm. The catalysed reaction is urea + 2 H2O + H(+) = hydrogencarbonate + 2 NH4(+). It participates in nitrogen metabolism; urea degradation; CO(2) and NH(3) from urea (urease route): step 1/1. In Bordetella pertussis (strain Tohama I / ATCC BAA-589 / NCTC 13251), this protein is Urease subunit alpha.